The chain runs to 75 residues: Carwaprin-b (75 aa).

Positions 1-24 are cleaved as a signal peptide; the sequence is MSSGGLLLLLGLLTLWAELTPVSS. One can recognise a WAP domain in the interval 27–72; it reads RPKKPGLCPPRPQKPPCVRECKNDWRCPGEQKCCRYGCIYECRDPI. Cystine bridges form between C34–C60, C43–C64, C47–C59, and C53–C68.

This sequence belongs to the venom waprin family. As to expression, expressed by the venom gland.

It localises to the secreted. Its function is as follows. Damages membranes of susceptible bacteria. Has no hemolytic activity. Not toxic to mice. Does not inhibit the proteinases elastase and cathepsin G. This chain is Carwaprin-b, found in Tropidechis carinatus (Australian rough-scaled snake).